A 430-amino-acid polypeptide reads, in one-letter code: Nucleoporin NUP42 (430 aa).

Residues 1–68 (MSAFGNPFTS…AFGMPQFGTN (68 aa)) form a disordered region. The stretch at 2–5 (SAFG) is one SXFG 1 repeat. The segment covering 15 to 36 (NLSNTSGINPFTNNAASTNNMG) has biased composition (polar residues). SAFGXPXFG repeat units follow at residues 38-46 (SAFGRPSFG) and 58-66 (SAFGMPQFG). Residues 45–68 (FGTANTMTGGTTTSAFGMPQFGTN) show a composition bias toward low complexity. An SXFG 2 repeat occupies 78–81 (SAFG). 2 SAFGXPXFG repeats span residues 90–98 (SAFGAPAFG) and 112–120 (SAFGAPSFG). Positions 121–230 (STGFGAMAAT…QNTSTSSGTG (110 aa)) are interactions with CRM1 and GFD1. 2 FG repeats span residues 124-125 (FG) and 134-135 (FG). Ser137 is subject to Phosphoserine. Residues 143–151 (SAFGQPAFG) form an SAFGXPXFG 5 repeat. 2 SXFG repeats span residues 168-171 (SAFG) and 182-185 (SPFG). Positions 180-294 (TTSPFGSLQQ…QSPFSGGSGG (115 aa)) are disordered. Over residues 186–201 (SLQQNASQNASSTSSA) the composition is skewed to low complexity. An SAFGXPXFG 6 repeat occupies 200-208 (SAFGKPTFG). A compositionally biased stretch (polar residues) spans 209 to 230 (AATNTQSPFGTIQNTSTSSGTG). SXFG repeat units lie at residues 215–218 (SPFG) and 232–235 (SPFG). 2 stretches are compositionally biased toward polar residues: residues 237–252 (FGTN…NLQS) and 260–285 (PFGT…TNNQ). 2 SXFG repeats span residues 259–262 (SPFG) and 277–280 (SAFG). An FG 3 repeat occupies 296–297 (FG). A Phosphoserine modification is found at Ser298. The SXFG 9 repeat unit spans residues 312 to 315 (SSFG). FG repeat units follow at residues 319–322 (FSFG), 339–340 (FG), and 361–364 (FGFG). A disordered region spans residues 319-346 (FSFGITPQNDANKVSQSNPSFGQTMPNT). Residues 323–346 (ITPQNDANKVSQSNPSFGQTMPNT) show a composition bias toward polar residues. The interval 365 to 430 (QQQMNATNVN…DIPPPPALVA (66 aa)) is interaction with GLE1.

As to quaternary structure, component of the nuclear pore complex (NPC). NPC constitutes the exclusive means of nucleocytoplasmic transport. NPCs allow the passive diffusion of ions and small molecules and the active, nuclear transport receptor-mediated bidirectional transport of macromolecules such as proteins, RNAs, ribonucleoparticles (RNPs), and ribosomal subunits across the nuclear envelope. Due to its 8-fold rotational symmetry, all subunits are present with 8 copies or multiples thereof. NUP42 interacts with the NUP82 subcomplex. It interacts directly with GLE1, and through its FG repeats with GFD1, the heterodimeric mRNA transport factor MEX67/MTR2, and the karyopherin CRM1.

The protein localises to the nucleus. It is found in the nuclear pore complex. Its subcellular location is the nucleus membrane. Its function is as follows. Functions as a component of the nuclear pore complex (NPC). NPC components, collectively referred to as nucleoporins (NUPs), can play the role of both NPC structural components and of docking or interaction partners for transiently associated nuclear transport factors. Active directional transport is assured by both, a Phe-Gly (FG) repeat affinity gradient for these transport factors across the NPC and a transport cofactor concentration gradient across the nuclear envelope (GSP1 and GSP2 GTPases associated predominantly with GTP in the nucleus, with GDP in the cytoplasm). NUP42 is specifically important for nuclear protein and mRNA export. This chain is Nucleoporin NUP42 (NUP42), found in Saccharomyces cerevisiae (strain ATCC 204508 / S288c) (Baker's yeast).